Reading from the N-terminus, the 332-residue chain is DNA-directed RNA polymerase subunit alpha (332 aa).

The interval 1–244 is alpha N-terminal domain (alpha-NTD); sequence MKKHAKVYYS…AHLNLLADVE (244 aa). The tract at residues 259–332 is alpha C-terminal domain (alpha-CTD); the sequence is IKEEPIRRFS…NYKNENKGEN (74 aa).

The protein belongs to the RNA polymerase alpha chain family. As to quaternary structure, homodimer. The RNAP catalytic core consists of 2 alpha, 1 beta, 1 beta' and 1 omega subunit. When a sigma factor is associated with the core the holoenzyme is formed, which can initiate transcription.

It catalyses the reaction RNA(n) + a ribonucleoside 5'-triphosphate = RNA(n+1) + diphosphate. Functionally, DNA-dependent RNA polymerase catalyzes the transcription of DNA into RNA using the four ribonucleoside triphosphates as substrates. This is DNA-directed RNA polymerase subunit alpha from Mesomycoplasma hyopneumoniae (strain 7448) (Mycoplasma hyopneumoniae).